Consider the following 203-residue polypeptide: Transcriptional regulator GfcR (203 aa).

The protein belongs to the purine/pyrimidine phosphoribosyltransferase family. GfcR subfamily.

This chain is Transcriptional regulator GfcR, found in Methanococcoides burtonii (strain DSM 6242 / NBRC 107633 / OCM 468 / ACE-M).